A 390-amino-acid chain; its full sequence is Peroxisomal sarcosine oxidase (390 aa).

FAD is bound at residue 9 to 39 (DAIVIGAGIQGCFTAYHLAKHSKSVLLLEQF). N6-acetyllysine occurs at positions 126 and 287. S-8alpha-FAD cysteine is present on C319. The short motif at 388-390 (AHL) is the Microbody targeting signal element.

This sequence belongs to the MSOX/MTOX family. FAD is required as a cofactor. As to expression, kidney and liver.

It localises to the peroxisome. The catalysed reaction is sarcosine + O2 + H2O = formaldehyde + glycine + H2O2. The enzyme catalyses L-pipecolate + O2 = L-1-piperideine-6-carboxylate + H2O2 + H(+). Functionally, metabolizes sarcosine, L-pipecolic acid and L-proline. This is Peroxisomal sarcosine oxidase (Pipox) from Mus musculus (Mouse).